A 272-amino-acid chain; its full sequence is Shikimate dehydrogenase (NADP(+)) (272 aa).

Shikimate contacts are provided by residues 14–16 (SKS) and Thr-61. Lys-65 (proton acceptor) is an active-site residue. Glu-77 lines the NADP(+) pocket. Positions 86 and 102 each coordinate shikimate. NADP(+) contacts are provided by residues 126-130 (GAGGA), 149-154 (NRTADK), and Met-212. Tyr-214 contacts shikimate. Gly-237 is an NADP(+) binding site.

It belongs to the shikimate dehydrogenase family. As to quaternary structure, homodimer.

It carries out the reaction shikimate + NADP(+) = 3-dehydroshikimate + NADPH + H(+). Its pathway is metabolic intermediate biosynthesis; chorismate biosynthesis; chorismate from D-erythrose 4-phosphate and phosphoenolpyruvate: step 4/7. Involved in the biosynthesis of the chorismate, which leads to the biosynthesis of aromatic amino acids. Catalyzes the reversible NADPH linked reduction of 3-dehydroshikimate (DHSA) to yield shikimate (SA). The polypeptide is Shikimate dehydrogenase (NADP(+)) (Glaesserella parasuis serovar 5 (strain SH0165) (Haemophilus parasuis)).